The chain runs to 249 residues: Eukaryotic translation initiation factor 3 subunit K (249 aa).

Residues 46–222 form the PCI domain; that stretch reads FDCYANLALL…VKVPTNKENE (177 aa).

It belongs to the eIF-3 subunit K family. In terms of assembly, component of the eukaryotic translation initiation factor 3 (eIF-3) complex.

Its subcellular location is the cytoplasm. Component of the eukaryotic translation initiation factor 3 (eIF-3) complex, which is involved in protein synthesis of a specialized repertoire of mRNAs and, together with other initiation factors, stimulates binding of mRNA and methionyl-tRNAi to the 40S ribosome. The eIF-3 complex specifically targets and initiates translation of a subset of mRNAs involved in cell proliferation. The chain is Eukaryotic translation initiation factor 3 subunit K from Aspergillus fumigatus (strain CBS 144.89 / FGSC A1163 / CEA10) (Neosartorya fumigata).